Reading from the N-terminus, the 396-residue chain is S-adenosylmethionine synthase (396 aa).

Position 16 (His-16) interacts with ATP. Asp-18 contributes to the Mg(2+) binding site. Residue Glu-44 participates in K(+) binding. Residues Glu-57 and Gln-100 each coordinate L-methionine. Residues 100–110 (QSVDINQGVDR) form a flexible loop region. ATP-binding positions include 165–167 (DAK), 231–232 (KF), Asp-240, 246–247 (RK), Ala-263, and Lys-267. Asp-240 provides a ligand contact to L-methionine. Lys-271 provides a ligand contact to L-methionine.

The protein belongs to the AdoMet synthase family. Homotetramer; dimer of dimers. Mg(2+) serves as cofactor. The cofactor is K(+).

The protein localises to the cytoplasm. The enzyme catalyses L-methionine + ATP + H2O = S-adenosyl-L-methionine + phosphate + diphosphate. Its pathway is amino-acid biosynthesis; S-adenosyl-L-methionine biosynthesis; S-adenosyl-L-methionine from L-methionine: step 1/1. Its function is as follows. Catalyzes the formation of S-adenosylmethionine (AdoMet) from methionine and ATP. The overall synthetic reaction is composed of two sequential steps, AdoMet formation and the subsequent tripolyphosphate hydrolysis which occurs prior to release of AdoMet from the enzyme. This chain is S-adenosylmethionine synthase, found in Azotobacter vinelandii (strain DJ / ATCC BAA-1303).